Here is a 339-residue protein sequence, read N- to C-terminus: Transcription initiation factor IIB (339 aa).

The TFIIB-type zinc-finger motif lies at 39 to 70 (EELICPVCGSKSIIKDYERAEIVCEMCGCVLQ). Zn(2+)-binding residues include Cys-43, Cys-46, Cys-62, and Cys-65. 2 repeat units span residues 156–239 (SELD…SREL) and 250–331 (DYVP…ELTE).

It belongs to the TFIIB family.

Functionally, stabilizes TBP binding to an archaeal box-A promoter. Also responsible for recruiting RNA polymerase II to the pre-initiation complex (DNA-TBP-TFIIB). The polypeptide is Transcription initiation factor IIB (Methanococcus maripaludis (strain DSM 14266 / JCM 13030 / NBRC 101832 / S2 / LL)).